The chain runs to 393 residues: Phosphoglycerate kinase (393 aa).

Residues 21-23, R36, 59-62, R114, and R147 contribute to the substrate site; these read DLN and HLGR. Residues K198, E320, and 346 to 349 contribute to the ATP site; that span reads GGDT.

This sequence belongs to the phosphoglycerate kinase family. As to quaternary structure, monomer.

The protein resides in the cytoplasm. The enzyme catalyses (2R)-3-phosphoglycerate + ATP = (2R)-3-phospho-glyceroyl phosphate + ADP. It functions in the pathway carbohydrate degradation; glycolysis; pyruvate from D-glyceraldehyde 3-phosphate: step 2/5. In Methylobacillus flagellatus (strain ATCC 51484 / DSM 6875 / VKM B-1610 / KT), this protein is Phosphoglycerate kinase.